A 117-amino-acid polypeptide reads, in one-letter code: Large ribosomal subunit protein uL24 (117 aa).

Belongs to the universal ribosomal protein uL24 family. In terms of assembly, part of the 50S ribosomal subunit.

Its function is as follows. One of two assembly initiator proteins, it binds directly to the 5'-end of the 23S rRNA, where it nucleates assembly of the 50S subunit. One of the proteins that surrounds the polypeptide exit tunnel on the outside of the subunit. The protein is Large ribosomal subunit protein uL24 of Thermosynechococcus vestitus (strain NIES-2133 / IAM M-273 / BP-1).